The following is a 576-amino-acid chain: Polypeptide N-acetylgalactosaminyltransferase 12 (576 aa).

Residues 1–19 are Cytoplasmic-facing; sequence MWGRAVRRRCPRGLRRGRE. A helical; Signal-anchor for type II membrane protein transmembrane segment spans residues 20 to 37; that stretch reads ALLALLALAGLGALLRAR. A disordered region spans residues 38–58; it reads SRSGTVDPGPPRTPLPGRHEP. Over 38 to 576 the chain is Lumenal; sequence SRSGTVDPGP…QRWFFKERMS (539 aa). 5 disulfide bridges follow: Cys120-Cys353, Cys344-Cys417, Cys453-Cys474, Cys501-Cys516, and Cys542-Cys561. Residues 130-239 are catalytic subdomain A; the sequence is LPKTSVVIAF…EGWLEPLLQR (110 aa). Asp171 and Arg200 together coordinate substrate. Mn(2+) contacts are provided by Asp223 and His225. A catalytic subdomain B region spans residues 299–361; that stretch reads VIRSPTMAGG…PCSHVGHVFP (63 aa). Substrate is bound at residue Trp330. His358 contacts Mn(2+). Tyr366 contacts substrate. The 133-residue stretch at 440 to 572 folds into the Ricin B-type lectin domain; the sequence is FFGMLQNRGL…NSDNQRWFFK (133 aa).

Belongs to the glycosyltransferase 2 family. GalNAc-T subfamily. Requires Mn(2+) as cofactor.

The protein localises to the golgi apparatus membrane. It catalyses the reaction L-seryl-[protein] + UDP-N-acetyl-alpha-D-galactosamine = a 3-O-[N-acetyl-alpha-D-galactosaminyl]-L-seryl-[protein] + UDP + H(+). It carries out the reaction L-threonyl-[protein] + UDP-N-acetyl-alpha-D-galactosamine = a 3-O-[N-acetyl-alpha-D-galactosaminyl]-L-threonyl-[protein] + UDP + H(+). It participates in protein modification; protein glycosylation. In terms of biological role, catalyzes the initial reaction in O-linked oligosaccharide biosynthesis, the transfer of an N-acetyl-D-galactosamine residue to a serine or threonine residue on the protein receptor. Has activity toward non-glycosylated peptides such as Muc5AC, Muc1a and EA2, and no detectable activity with Muc2 and Muc7. Displays enzymatic activity toward the Gal-NAc-Muc5AC glycopeptide, but no detectable activity to mono-GalNAc-glycosylated Muc1a, Muc2, Muc7 and EA2. May play an important role in the initial step of mucin-type oligosaccharide biosynthesis in digestive organs. The sequence is that of Polypeptide N-acetylgalactosaminyltransferase 12 (Galnt12) from Mus musculus (Mouse).